The chain runs to 397 residues: Succinyl-diaminopimelate desuccinylase (397 aa).

Histidine 73 provides a ligand contact to Zn(2+). The active site involves aspartate 75. Aspartate 106 provides a ligand contact to Zn(2+). Catalysis depends on glutamate 140, which acts as the Proton acceptor. Glutamate 141, glutamate 169, and histidine 366 together coordinate Zn(2+).

The protein belongs to the peptidase M20A family. DapE subfamily. Homodimer. The cofactor is Zn(2+). Co(2+) is required as a cofactor.

The enzyme catalyses N-succinyl-(2S,6S)-2,6-diaminopimelate + H2O = (2S,6S)-2,6-diaminopimelate + succinate. The protein operates within amino-acid biosynthesis; L-lysine biosynthesis via DAP pathway; LL-2,6-diaminopimelate from (S)-tetrahydrodipicolinate (succinylase route): step 3/3. In terms of biological role, catalyzes the hydrolysis of N-succinyl-L,L-diaminopimelic acid (SDAP), forming succinate and LL-2,6-diaminopimelate (DAP), an intermediate involved in the bacterial biosynthesis of lysine and meso-diaminopimelic acid, an essential component of bacterial cell walls. The polypeptide is Succinyl-diaminopimelate desuccinylase (Sinorhizobium medicae (strain WSM419) (Ensifer medicae)).